Reading from the N-terminus, the 274-residue chain is Elongation factor Ts (274 aa).

Positions 79 to 82 are involved in Mg(2+) ion dislocation from EF-Tu; sequence TDFV.

This sequence belongs to the EF-Ts family.

Its subcellular location is the cytoplasm. Functionally, associates with the EF-Tu.GDP complex and induces the exchange of GDP to GTP. It remains bound to the aminoacyl-tRNA.EF-Tu.GTP complex up to the GTP hydrolysis stage on the ribosome. In Azobacteroides pseudotrichonymphae genomovar. CFP2, this protein is Elongation factor Ts.